The primary structure comprises 257 residues: DNA-binding and peroxide stress resistance protein YaaA (257 aa).

Positions 35-66 (IGIARKLSAPQIGKLMSISDKLADLNATRFHD) match the Helix-hairpin-helix motif.

The protein belongs to the UPF0246 family.

The protein resides in the cytoplasm. Functionally, protects bacteria from neutrophil-related defense upon infection of mammals. Binds DNA. In Klebsiella pneumoniae subsp. pneumoniae (strain HS11286), this protein is DNA-binding and peroxide stress resistance protein YaaA.